The primary structure comprises 463 residues: Argininosuccinate lyase (463 aa).

The protein belongs to the lyase 1 family. Argininosuccinate lyase subfamily.

It is found in the cytoplasm. It catalyses the reaction 2-(N(omega)-L-arginino)succinate = fumarate + L-arginine. It functions in the pathway amino-acid biosynthesis; L-arginine biosynthesis; L-arginine from L-ornithine and carbamoyl phosphate: step 3/3. This is Argininosuccinate lyase from Thermosynechococcus vestitus (strain NIES-2133 / IAM M-273 / BP-1).